A 170-amino-acid polypeptide reads, in one-letter code: CFA/I fimbrial subunit B (170 aa).

The first 23 residues, 1 to 23, serve as a signal peptide directing secretion; sequence MKFKKTIGAMALTTMFVAVSASA.

The protein belongs to the fimbrial CS1 protein family. CFA/I fimbriae are rather rigid, thread-like filaments of 0.5-1 micrometer, with an apparent axial hole, and a diameter of 7 nanometers. A single CFA/I fimbria consists of about 100 identical protein subunits.

It localises to the fimbrium. Functionally, fimbriae (also called pili), polar filaments radiating from the surface of the bacterium to a length of 0.5-1.5 micrometers and numbering 100-300 per cell, enable bacteria to colonize the epithelium of specific host organs. The chain is CFA/I fimbrial subunit B (cfaB) from Escherichia coli.